Consider the following 178-residue polypeptide: Mediator of RNA polymerase II transcription subunit 31 (178 aa).

A compositionally biased stretch (acidic residues) spans 129-140; the sequence is EGQELEESEDEA. The tract at residues 129 to 178 is disordered; the sequence is EGQELEESEDEADIRQKDTEDEDDEETMKKPDADTAEKNSTTSTVSKKEK. The span at 155-165 shows a compositional bias: basic and acidic residues; the sequence is TMKKPDADTAE. The span at 166 to 178 shows a compositional bias: polar residues; sequence KNSTTSTVSKKEK.

This sequence belongs to the Mediator complex subunit 31 family. As to quaternary structure, component of the Mediator complex.

Its subcellular location is the nucleus. Functionally, component of the Mediator complex, a coactivator involved in the regulated transcription of nearly all RNA polymerase II-dependent genes. Mediator functions as a bridge to convey information from gene-specific regulatory proteins to the basal RNA polymerase II transcription machinery. Mediator is recruited to promoters by direct interactions with regulatory proteins and serves as a scaffold for the assembly of a functional preinitiation complex with RNA polymerase II and the general transcription factors. This is Mediator of RNA polymerase II transcription subunit 31 from Caenorhabditis elegans.